The primary structure comprises 457 residues: Methylenetetrahydrofolate--tRNA-(uracil-5-)-methyltransferase TrmFO (457 aa).

12–17 (GGGLAG) provides a ligand contact to FAD.

The protein belongs to the MnmG family. TrmFO subfamily. FAD serves as cofactor.

It is found in the cytoplasm. The enzyme catalyses uridine(54) in tRNA + (6R)-5,10-methylene-5,6,7,8-tetrahydrofolate + NADH + H(+) = 5-methyluridine(54) in tRNA + (6S)-5,6,7,8-tetrahydrofolate + NAD(+). It carries out the reaction uridine(54) in tRNA + (6R)-5,10-methylene-5,6,7,8-tetrahydrofolate + NADPH + H(+) = 5-methyluridine(54) in tRNA + (6S)-5,6,7,8-tetrahydrofolate + NADP(+). Catalyzes the folate-dependent formation of 5-methyl-uridine at position 54 (M-5-U54) in all tRNAs. The chain is Methylenetetrahydrofolate--tRNA-(uracil-5-)-methyltransferase TrmFO from Myxococcus xanthus (strain DK1622).